The sequence spans 490 residues: Aspartyl/glutamyl-tRNA(Asn/Gln) amidotransferase subunit B (490 aa).

It belongs to the GatB/GatE family. GatB subfamily. Heterotrimer of A, B and C subunits.

It catalyses the reaction L-glutamyl-tRNA(Gln) + L-glutamine + ATP + H2O = L-glutaminyl-tRNA(Gln) + L-glutamate + ADP + phosphate + H(+). The enzyme catalyses L-aspartyl-tRNA(Asn) + L-glutamine + ATP + H2O = L-asparaginyl-tRNA(Asn) + L-glutamate + ADP + phosphate + 2 H(+). Allows the formation of correctly charged Asn-tRNA(Asn) or Gln-tRNA(Gln) through the transamidation of misacylated Asp-tRNA(Asn) or Glu-tRNA(Gln) in organisms which lack either or both of asparaginyl-tRNA or glutaminyl-tRNA synthetases. The reaction takes place in the presence of glutamine and ATP through an activated phospho-Asp-tRNA(Asn) or phospho-Glu-tRNA(Gln). In Methylobacterium radiotolerans (strain ATCC 27329 / DSM 1819 / JCM 2831 / NBRC 15690 / NCIMB 10815 / 0-1), this protein is Aspartyl/glutamyl-tRNA(Asn/Gln) amidotransferase subunit B.